We begin with the raw amino-acid sequence, 462 residues long: Microspherule protein 1 (462 aa).

M1 carries the N-acetylmethionine modification. The segment at 1–130 is disordered; the sequence is MDKDSQGLLD…KSKQPLQVTK (130 aa). A Phosphoserine modification is found at S22. A compositionally biased stretch (basic residues) spans 43–55; it reads PKRRSSSRFIKRK. S102 carries the post-translational modification Phosphoserine. T103 is subject to Phosphothreonine. Positions 103–112 are enriched in pro residues; sequence TPVPPSPAPA. At S108 the chain carries Phosphoserine. The Nuclear localization signal motif lies at 113-123; that stretch reads PGLTKRVKKSK. 2 positions are modified to N6-acetyllysine: K123 and K130. A Phosphoserine modification is found at S282. A coiled-coil region spans residues 301–335; the sequence is LEHELMVADRRQKREIRQLEQELHKWQVLVDSITG. An FHA domain is found at 363–419; it reads ITLGRATKDNQIDVDLSLEGPAWKISRKQGVIKLKNNGDFFIANEGRRPIYIDGRPV. Positions 389 to 396 match the UBR5-degron motif; the sequence is RKQGVIKL.

Component of the chromatin remodeling INO80 complex; specifically part of a complex module associated with the N-terminus of INO80. Component of some MLL1/MLL complex, at least composed of the core components KMT2A/MLL1, ASH2L, HCFC1, WDR5 and RBBP5, as well as the facultative components BACC1, CHD8, E2F6, HSP70, INO80C, KANSL1, LAS1L, MAX, MCRS1, MGA, KAT8/MOF, PELP1, PHF20, PRP31, RING2, RUVB1/TIP49A, RUVB2/TIP49B, SENP3, TAF1, TAF4, TAF6, TAF7, TAF9 and TEX10. Component of the NSL complex at least composed of MOF/KAT8, KANSL1, KANSL2, KANSL3, MCRS1, PHF20, OGT1/OGT, WDR5 and HCFC1. Interacts with NOP2. Interacts with PINX1. Interacts with TERT. Interacts with CCDC85B. Interacts with DAXX. Interacts (via N-terminus) with FMR1 (via phosphorylated form). Interacts with FXR1 and FXR2. Interacts (via C-terminus) with NDE1 (via C-terminus); phosphorylation of NDE1 inhibits the interaction. Interacts (via C-terminus) with ZNF375. Interacts (via C-terminus) with active GTP-bound RHEB (via N-terminus) under conditions of high amino acid concentration; the interaction promotes mTORC1 complex activation by RHEB. Interacts (via N-terminus) with the mTORC1 complex; the interaction ensures mTORC1 activation by RHEB. Interacts with DYNC1I1; the interaction is required for the proper distribution of centriolar satellites. Interacts with TTBK2; the interaction is required for recruitment of TTBK2 to the mother centriole. Interacts with KIF2A; the interaction occurs during mitosis and facilitates chromosome alignment. As to quaternary structure, (Microbial infection) Interacts with Herpes simplex virus ICP22. In terms of processing, ubiquitinated by UBR5 when not assembled in the INO80 complex, leading to its degradation: UBR5 recognizes and binds a degron that is not accessible when MCRS1 is part of the INO80 complex. Phosphorylated by AURKA on Ser-35 and/or Ser-36 during mitosis which is required for kinetochore fiber assembly and mitotic progression but not for spindle localization or for chromosome-induced microtuble aster formation. Also phosphorylated by AURKA on Ser-85 and/or Ser-87. Phosphorylated by TTK/MPS1 which enhances recruitment of KIF2A to the minus end of spindle microtubules and facilitates precise chromosome segregation. In terms of tissue distribution, detected in testis, and at lower levels in spleen, thymus, prostate, uterus, small intestine, colon and leukocytes.

Its subcellular location is the nucleus. The protein localises to the nucleolus. It localises to the cytoplasm. The protein resides in the cytoskeleton. It is found in the microtubule organizing center. Its subcellular location is the centrosome. The protein localises to the spindle pole. It localises to the chromosome. The protein resides in the centromere. It is found in the kinetochore. Its subcellular location is the lysosome. The protein localises to the centriolar satellite. In terms of biological role, modulates the transcription repressor activity of DAXX by recruiting it to the nucleolus. As part of the NSL complex, may be involved in acetylation of nucleosomal histone H4 on several lysine residues. Putative regulatory component of the chromatin remodeling INO80 complex which is involved in transcriptional regulation, DNA replication and probably DNA repair. May also be an inhibitor of TERT telomerase activity. Binds to G-quadruplex structures in mRNA. Binds to RNA homomer poly(G) and poly(U). Maintains RHEB at the lysosome in its active GTP-bound form and prevents its interaction with the mTORC1 complex inhibitor TSC2, ensuring activation of the mTORC1 complex by RHEB. Stabilizes the minus ends of kinetochore fibers by protecting them from depolymerization, ensuring functional spindle assembly during mitosis. Following phosphorylation by TTK/MPS1, enhances recruitment of KIF2A to the minus ends of mitotic spindle microtubules which promotes chromosome alignment. Regulates the morphology of microtubule minus ends in mitotic spindle by maintaining them in a closed conformation characterized by the presence of an electron-dense cap. Regulates G2/M transition and spindle assembly during oocyte meiosis. Mediates histone modifications and transcriptional regulation in germinal vesicle oocytes which are required for meiotic progression. Also regulates microtubule nucleation and spindle assembly by activating aurora kinases during oocyte meiosis. Contributes to the establishment of centriolar satellites and also plays a role in primary cilium formation by recruiting TTBK2 to the mother centriole which is necessary for removal of the CP110 cap from the mother centriole, an early step in ciliogenesis. Required for epiblast development during early embryogenesis. Essential for cell viability. This is Microspherule protein 1 (MCRS1) from Homo sapiens (Human).